Here is a 492-residue protein sequence, read N- to C-terminus: WD repeat-containing protein JIP5 (492 aa).

WD repeat units follow at residues 127-166, 178-217, 236-274, 276-317, and 365-405; these read RHKG…VVKK, KKND…LSNS, RSAY…ILIS, DQED…LEDQ, and RNHS…VEEN. 2 stretches are compositionally biased toward acidic residues: residues 404 to 414 and 422 to 433; these read ENASVESDSDE and DLSDDTSSDDET. Positions 404–472 are disordered; sequence ENASVESDSD…SKSVKKRKIM (69 aa). A compositionally biased stretch (basic and acidic residues) spans 449–462; sequence KDLKEDHQEEKESN.

As to quaternary structure, interacts with BUD27 and GIS1.

It is found in the nucleus. It localises to the nucleolus. The chain is WD repeat-containing protein JIP5 (JIP5) from Saccharomyces cerevisiae (strain ATCC 204508 / S288c) (Baker's yeast).